The following is a 166-amino-acid chain: Deoxyuridine 5'-triphosphate nucleotidohydrolase (166 aa).

A disordered region spans residues 1-24 (MACVNEPSPKLQKLDRNGIHGDSS). Residue glutamate 138 coordinates Mg(2+).

It belongs to the dUTPase family. As to quaternary structure, homotrimer. Requires Mg(2+) as cofactor.

The catalysed reaction is dUTP + H2O = dUMP + diphosphate + H(+). It functions in the pathway pyrimidine metabolism; dUMP biosynthesis; dUMP from dCTP (dUTP route): step 2/2. This enzyme is involved in nucleotide metabolism: it produces dUMP, the immediate precursor of thymidine nucleotides and it decreases the intracellular concentration of dUTP, preventing uracil incorporation into DNA. The chain is Deoxyuridine 5'-triphosphate nucleotidohydrolase (DUT) from Arabidopsis thaliana (Mouse-ear cress).